The sequence spans 28 residues: uncharacterized protein (28 aa).

This is an uncharacterized protein from Archaeoglobus fulgidus (strain ATCC 49558 / DSM 4304 / JCM 9628 / NBRC 100126 / VC-16).